The primary structure comprises 177 residues: ATP synthase subunit delta (177 aa).

The protein belongs to the ATPase delta chain family. As to quaternary structure, F-type ATPases have 2 components, F(1) - the catalytic core - and F(0) - the membrane proton channel. F(1) has five subunits: alpha(3), beta(3), gamma(1), delta(1), epsilon(1). F(0) has three main subunits: a(1), b(2) and c(10-14). The alpha and beta chains form an alternating ring which encloses part of the gamma chain. F(1) is attached to F(0) by a central stalk formed by the gamma and epsilon chains, while a peripheral stalk is formed by the delta and b chains.

The protein localises to the cell inner membrane. Functionally, f(1)F(0) ATP synthase produces ATP from ADP in the presence of a proton or sodium gradient. F-type ATPases consist of two structural domains, F(1) containing the extramembraneous catalytic core and F(0) containing the membrane proton channel, linked together by a central stalk and a peripheral stalk. During catalysis, ATP synthesis in the catalytic domain of F(1) is coupled via a rotary mechanism of the central stalk subunits to proton translocation. In terms of biological role, this protein is part of the stalk that links CF(0) to CF(1). It either transmits conformational changes from CF(0) to CF(1) or is implicated in proton conduction. This chain is ATP synthase subunit delta, found in Klebsiella pneumoniae subsp. pneumoniae (strain ATCC 700721 / MGH 78578).